We begin with the raw amino-acid sequence, 144 residues long: MFLNTIQPAVGATHAGRRVGRGIGSGLGKTGGRGHKGQKSRSGGFHKVGFEGGQMPLQRRLPKRGFKSLTASANAQLRLSELESIAVNEIDILVLKQAGLIASTVSNVKVIAFGEISKAVALKGIKVTKGARAAIEAVGGKIEM.

Residues 20 to 49 (GRGIGSGLGKTGGRGHKGQKSRSGGFHKVG) form a disordered region. The segment covering 21–31 (RGIGSGLGKTG) has biased composition (gly residues).

The protein belongs to the universal ribosomal protein uL15 family. As to quaternary structure, part of the 50S ribosomal subunit.

Binds to the 23S rRNA. In Neisseria meningitidis serogroup A / serotype 4A (strain DSM 15465 / Z2491), this protein is Large ribosomal subunit protein uL15.